The sequence spans 410 residues: Lipoyl synthase, mitochondrial (410 aa).

Residues C134, C139, C145, C165, C169, C172, and S390 each contribute to the [4Fe-4S] cluster site. The region spanning 148-379 (AGKSTAATAT…AKIGNDLGFL (232 aa)) is the Radical SAM core domain.

Belongs to the radical SAM superfamily. Lipoyl synthase family. [4Fe-4S] cluster serves as cofactor.

The protein localises to the mitochondrion. It carries out the reaction [[Fe-S] cluster scaffold protein carrying a second [4Fe-4S](2+) cluster] + N(6)-octanoyl-L-lysyl-[protein] + 2 oxidized [2Fe-2S]-[ferredoxin] + 2 S-adenosyl-L-methionine + 4 H(+) = [[Fe-S] cluster scaffold protein] + N(6)-[(R)-dihydrolipoyl]-L-lysyl-[protein] + 4 Fe(3+) + 2 hydrogen sulfide + 2 5'-deoxyadenosine + 2 L-methionine + 2 reduced [2Fe-2S]-[ferredoxin]. The protein operates within protein modification; protein lipoylation via endogenous pathway; protein N(6)-(lipoyl)lysine from octanoyl-[acyl-carrier-protein]: step 2/2. Catalyzes the radical-mediated insertion of two sulfur atoms into the C-6 and C-8 positions of the octanoyl moiety bound to the lipoyl domains of lipoate-dependent enzymes, thereby converting the octanoylated domains into lipoylated derivatives. In Schistosoma mansoni (Blood fluke), this protein is Lipoyl synthase, mitochondrial.